Here is a 325-residue protein sequence, read N- to C-terminus: ATP phosphoribosyltransferase (325 aa).

Belongs to the ATP phosphoribosyltransferase family. Long subfamily. The cofactor is Mg(2+).

The protein localises to the cytoplasm. The enzyme catalyses 1-(5-phospho-beta-D-ribosyl)-ATP + diphosphate = 5-phospho-alpha-D-ribose 1-diphosphate + ATP. It participates in amino-acid biosynthesis; L-histidine biosynthesis; L-histidine from 5-phospho-alpha-D-ribose 1-diphosphate: step 1/9. With respect to regulation, feedback inhibited by histidine. Functionally, catalyzes the condensation of ATP and 5-phosphoribose 1-diphosphate to form N'-(5'-phosphoribosyl)-ATP (PR-ATP). Has a crucial role in the pathway because the rate of histidine biosynthesis seems to be controlled primarily by regulation of HisG enzymatic activity. The sequence is that of ATP phosphoribosyltransferase from Nitrobacter winogradskyi (strain ATCC 25391 / DSM 10237 / CIP 104748 / NCIMB 11846 / Nb-255).